A 179-amino-acid polypeptide reads, in one-letter code: Natural killer cells antigen CD94 (179 aa).

The Cytoplasmic segment spans residues methionine 1–arginine 10. The chain crosses the membrane as a helical; Signal-anchor for type II membrane protein span at residues leucine 11 to leucine 31. Residues lysine 32–isoleucine 179 lie on the Extracellular side of the membrane. Intrachain disulfides connect cysteine 58–cysteine 70 and cysteine 61–cysteine 72. Positions tyrosine 68–lysine 175 constitute a C-type lectin domain. 2 N-linked (GlcNAc...) asparagine glycosylation sites follow: asparagine 83 and asparagine 132. 2 disulfides stabilise this stretch: cysteine 89–cysteine 174 and cysteine 152–cysteine 166.

Can form disulfide-bonded heterodimer with NKG2 family members KLRC1 and KLRC2. KLRD1-KLRC1 heterodimer interacts with peptide-bound HLA-E-B2M heterotrimeric complex. KLRD1 plays a prominent role in directly interacting with HLA-E. KLRD1-KLRC1 interacts with much higher affinity with peptide-bound HLA-E-B2M than KLRD1-KLRC2. Interacts with the adapter protein TYROBP/DAP12; this interaction is required for cell surface expression and cell activation. In terms of tissue distribution, expressed in NK cell subsets (at protein level). Expressed in memory/effector CD8-positive alpha-beta T cell subsets (at protein level). Expressed in melanoma-specific cytotoxic T cell clones (at protein level). Expressed in terminally differentiated cytotoxic gamma-delta T cells (at protein level). KLRD1-KLRC1 and KLRD1-KLRC2 are differentially expressed in NK and T cell populations, with only minor subsets expressing both receptor complexes (at protein level).

It localises to the cell membrane. In terms of biological role, immune receptor involved in self-nonself discrimination. In complex with KLRC1 or KLRC2 on cytotoxic and regulatory lymphocyte subsets, recognizes non-classical major histocompatibility (MHC) class Ib molecule HLA-E loaded with self-peptides derived from the signal sequence of classical MHC class Ia and non-classical MHC class Ib molecules. Enables cytotoxic cells to monitor the expression of MHC class I molecules in healthy cells and to tolerate self. Primarily functions as a ligand binding subunit as it lacks the capacity to signal. KLRD1-KLRC1 acts as an immune inhibitory receptor. Key inhibitory receptor on natural killer (NK) cells that regulates their activation and effector functions. Dominantly counteracts T cell receptor signaling on a subset of memory/effector CD8-positive T cells as part of an antigen-driven response to avoid autoimmunity. On intraepithelial CD8-positive gamma-delta regulatory T cells triggers TGFB1 secretion, which in turn limits the cytotoxic programming of intraepithelial CD8-positive alpha-beta T cells, distinguishing harmless from pathogenic antigens. In HLA-E-rich tumor microenvironment, acts as an immune inhibitory checkpoint and may contribute to progressive loss of effector functions of NK cells and tumor-specific T cells, a state known as cell exhaustion. Upon HLA-E-peptide binding, transmits intracellular signals through KLRC1 immunoreceptor tyrosine-based inhibition motifs (ITIMs) by recruiting INPP5D/SHIP-1 and INPPL1/SHIP-2 tyrosine phosphatases to ITIMs, and ultimately opposing signals transmitted by activating receptors through dephosphorylation of proximal signaling molecules. Its function is as follows. KLRD1-KLRC2 acts as an immune activating receptor. On cytotoxic lymphocyte subsets recognizes HLA-E loaded with signal sequence-derived peptides from non-classical MHC class Ib HLA-G molecules, likely playing a role in the generation and effector functions of adaptive NK cells and in maternal-fetal tolerance during pregnancy. Regulates the effector functions of terminally differentiated cytotoxic lymphocyte subsets, and in particular may play a role in adaptive NK cell response to viral infection. Upon HLA-E-peptide binding, transmits intracellular signals via the adapter protein TYROBP/DAP12, triggering the phosphorylation of proximal signaling molecules and cell activation. Functionally, (Microbial infection) Viruses like human cytomegalovirus have evolved an escape mechanism whereby virus-induced down-regulation of host MHC class I molecules is coupled to the binding of viral peptides to HLA-E, restoring HLA-E expression and inducing HLA-E-dependent NK cell immune tolerance to infected cells. Recognizes HLA-E in complex with human cytomegalovirus UL40-derived peptide (VMAPRTLIL) and inhibits NK cell cytotoxicity. In terms of biological role, (Microbial infection) May recognize HLA-E in complex with HIV-1 gag/Capsid protein p24-derived peptide (AISPRTLNA) on infected cells and may inhibit NK cell cytotoxicity, a mechanism that allows HIV-1 to escape immune recognition. (Microbial infection) Upon SARS-CoV-2 infection, may contribute to functional exhaustion of cytotoxic NK cells and CD8-positive T cells. On NK cells, may recognize HLA-E in complex with SARS-CoV-2 S/Spike protein S1-derived peptide (LQPRTFLL) expressed on the surface of lung epithelial cells, inducing NK cell exhaustion and dampening antiviral immune surveillance. In Homo sapiens (Human), this protein is Natural killer cells antigen CD94 (KLRD1).